Consider the following 480-residue polypeptide: Ammonium transporter 3 member 3 (480 aa).

11 helical membrane passes run 31-51 (SATL…GSIV), 59-79 (SAFM…VWAY), 135-155 (MVYF…GSLL), 169-189 (LWIT…GFLF), 198-218 (GGYV…YWVG), 233-253 (ILLV…FNGG), 265-287 (AVLN…DVFF), 292-314 (SVIG…AGLV), 318-337 (AAIV…MMVL), 361-381 (GFLG…SLFL), and 407-427 (LFVT…ISLI).

It belongs to the ammonia transporter channel (TC 1.A.11.2) family.

It is found in the membrane. Involved in ammonium transport. The protein is Ammonium transporter 3 member 3 (AMT3-3) of Oryza sativa subsp. japonica (Rice).